Consider the following 476-residue polypeptide: Endonuclease SceI small subunit (476 aa).

This sequence belongs to the LAGLIDADG endonuclease family. Endonuclease SceI (Endo.SceI) is a heterodimer of ENS2 and SSC1. The N-terminus is blocked.

It localises to the mitochondrion. In terms of biological role, catalytic component of endonuclease SceI (Endo.SceI), which cleaves specifically at multiple sites on mitochondrial DNA and produces double-stranded breaks. This is Endonuclease SceI small subunit (ENS2) from Saccharomyces cerevisiae (Baker's yeast).